Reading from the N-terminus, the 506-residue chain is 2-isopropylmalate synthase (506 aa).

The Pyruvate carboxyltransferase domain maps to 4–266; the sequence is ILFMDTTLRD…EPSMTLKEIK (263 aa). Mn(2+)-binding residues include Asp-13, His-201, His-203, and Asn-237. Positions 390–506 are regulatory domain; sequence NITQLQVHFV…KLKSFIQLVK (117 aa).

The protein belongs to the alpha-IPM synthase/homocitrate synthase family. LeuA type 1 subfamily. As to quaternary structure, homodimer. Requires Mn(2+) as cofactor.

It is found in the cytoplasm. It catalyses the reaction 3-methyl-2-oxobutanoate + acetyl-CoA + H2O = (2S)-2-isopropylmalate + CoA + H(+). It functions in the pathway amino-acid biosynthesis; L-leucine biosynthesis; L-leucine from 3-methyl-2-oxobutanoate: step 1/4. Catalyzes the condensation of the acetyl group of acetyl-CoA with 3-methyl-2-oxobutanoate (2-ketoisovalerate) to form 3-carboxy-3-hydroxy-4-methylpentanoate (2-isopropylmalate). This chain is 2-isopropylmalate synthase, found in Bacillus thuringiensis (strain Al Hakam).